We begin with the raw amino-acid sequence, 580 residues long: Mucolipin-1 (580 aa).

Residues 1–38 (MTAPAGPRGSETERLLTPNPGYGTQAGPSPAPPTPPEE) are disordered. Topologically, residues 1 to 65 (MTAPAGPRGS…FRAKGRKPCK (65 aa)) are cytoplasmic. Residue serine 10 is modified to Phosphoserine. Positions 11–16 (ETERLL) match the Dileucine motif; mediates targeting to lysosomes motif. An interaction with phosphoinositides region spans residues 42-62 (RRRLKYFFMSPCDKFRAKGRK). The chain crosses the membrane as a helical span at residues 66–86 (LMLQVVKILVVTVQLILFGLS). The Extracellular segment spans residues 87–298 (NQLAVTFREE…VFQHGDNSFR (212 aa)). The tract at residues 107-121 (LGYSDGADDTFAAYT) is extracellular/lumenal pore loop. Cysteine 166 and cysteine 192 are joined by a disulfide. N-linked (GlcNAc...) asparagine glycosylation is present at asparagine 230. A disulfide bond links cysteine 253 and cysteine 284. The chain crosses the membrane as a helical span at residues 299–321 (LLFDVVVILTCSLSFLLCARSLL). The Cytoplasmic segment spans residues 322–350 (RGFLLQNEFVGFMWRQRGRVISLWERLEF). A helical membrane pass occupies residues 351-371 (VNGWYILLVTSDVLTISGTIM). Topologically, residues 372 to 382 (KIGIEAKNLAS) are extracellular. A helical transmembrane segment spans residues 383–405 (YDVCSILLGTSTLLVWVGVIRYL). The Cytoplasmic portion of the chain corresponds to 406–427 (TFFHNYNILIATLRVALPSVMR). The chain crosses the membrane as a helical span at residues 428 to 448 (FCCCVAVIYLGYCFCGWIVLG). The Extracellular segment spans residues 449–456 (PYHVKFRS). Residues 457 to 477 (LSMVSECLFSLINGDDMFVTF) constitute an intramembrane region (pore-forming). Positions 469–474 (NGDDMF) match the Selectivity filter motif. At 478 to 491 (AAMQAQQGRSSLVW) the chain is on the extracellular side. Residues 492–513 (LFSQLYLYSFISLFIYMVLSLF) form a helical membrane-spanning segment. Over 514 to 580 (IALITGAYDT…PSEEHSLLVN (67 aa)) the chain is Cytoplasmic. Serine 557 and serine 559 each carry phosphoserine; by PAK. A required for palmitoylation and association with membranes region spans residues 565-567 (CCC). Positions 573–578 (EEHSLL) match the Dileucine internalization motif; mediates AP2 complex-dependent internalization motif.

The protein belongs to the transient receptor (TC 1.A.4) family. Polycystin subfamily. MCOLN1 sub-subfamily. In terms of assembly, homotetramer. Homooligomer. Can heterooligomerize with MCOLN2 or MCOLN3; heteromeric assemblies have different channel properties as compared to the respective homooligomers and may be tissue-specific. Interacts with PDCD6. Interacts with TMEM163. Interacts with LAPTM4B. In terms of processing, palmitoylated; involved in association with membranes. Post-translationally, phosphorylation by PKA inhibits channel activity. Dephosphorylation increases activity. Proteolytically cleaved probably involving multiple lysosomal proteases including cathepsin B; inhibits lysosomal channel activity. In terms of tissue distribution, widely expressed in adult and fetal tissues.

Its subcellular location is the late endosome membrane. The protein localises to the lysosome membrane. The protein resides in the cytoplasmic vesicle membrane. It is found in the cell projection. It localises to the phagocytic cup. Its subcellular location is the cytoplasmic vesicle. The protein localises to the phagosome membrane. The protein resides in the cell membrane. The catalysed reaction is Ca(2+)(in) = Ca(2+)(out). It carries out the reaction Fe(2+)(in) = Fe(2+)(out). It catalyses the reaction Mg(2+)(in) = Mg(2+)(out). The enzyme catalyses K(+)(in) = K(+)(out). The catalysed reaction is Na(+)(in) = Na(+)(out). Its activity is regulated as follows. Channel activity is controlled by multiple regulatory mechanisms in different subcellular compartments. Channel function is transiently modulated by changes in Ca(2+) in a pH-dependent manner; pH changes modify the aggregation state of unitary channels; a negative cooperativity between extracellular/lumenal Ca(2+) and H(+) is suggested. Regulated by phosphoinositides in a compartment-specific manner: in lysosomes activated by PtdIns(3,5)P2 (Phosphatidylinositol 3,5-bisphosphate) and at the plasma membrane inhibited by PtdIns(4,5)P2 (Phosphatidylinositol 4,5-bisphosphate). In terms of biological role, nonselective cation channel probably playing a role in the regulation of membrane trafficking events and of metal homeostasis. Acts as a Ca(2+)-permeable cation channel with inwardly rectifying activity. Proposed to play a major role in Ca(2+) release from late endosome and lysosome vesicles to the cytoplasm, which is important for many lysosome-dependent cellular events, including the fusion and trafficking of these organelles, exocytosis and autophagy. Required for efficient uptake of large particles in macrophages in which Ca(2+) release from the lysosomes triggers lysosomal exocytosis. May also play a role in phagosome-lysosome fusion. Involved in lactosylceramide trafficking indicative for a role in the regulation of late endocytic membrane fusion/fission events. By mediating lysosomal Ca(2+) release is involved in regulation of mTORC1 signaling and in mTOR/TFEB-dependent lysosomal adaptation to environmental cues such as nutrient levels. Seems to act as lysosomal active oxygen species (ROS) sensor involved in ROS-induced TFEB activation and autophagy. Also functions as a Fe(2+) permeable channel in late endosomes and lysosomes. Also permeable to Mg(2+), Na(+). K(+) and Cs(+). Proposed to play a role in zinc homeostasis probably implicating its association with TMEM163 In adaptive immunity, TRPML2 and TRPML1 may play redundant roles in the function of the specialized lysosomes of B cells. Its function is as follows. May contribute to cellular lipase activity within the late endosomal pathway or at the cell surface which may be involved in processes of membrane reshaping and vesiculation, especially the growth of tubular structures. However, it is not known, whether it conveys the enzymatic activity directly, or merely facilitates the activity of an associated phospholipase. This Homo sapiens (Human) protein is Mucolipin-1.